The chain runs to 108 residues: UPF0145 protein LGAS_1099 (108 aa).

The protein belongs to the UPF0145 family.

In Lactobacillus gasseri (strain ATCC 33323 / DSM 20243 / BCRC 14619 / CIP 102991 / JCM 1131 / KCTC 3163 / NCIMB 11718 / NCTC 13722 / AM63), this protein is UPF0145 protein LGAS_1099.